Here is a 55-residue protein sequence, read N- to C-terminus: Large ribosomal subunit protein bL33 (55 aa).

The protein belongs to the bacterial ribosomal protein bL33 family.

This chain is Large ribosomal subunit protein bL33, found in Xanthobacter autotrophicus (strain ATCC BAA-1158 / Py2).